A 502-amino-acid polypeptide reads, in one-letter code: Type-2 serine--tRNA ligase (502 aa).

Residue alanine 304 participates in L-serine binding. Cysteine 306 is a Zn(2+) binding site. Arginine 336 contacts L-serine. ATP-binding positions include 336-338 (RYE) and 347-348 (RV). L-serine contacts are provided by residues 353–355 (RVE) and glutamine 400. Glutamate 355 lines the Zn(2+) pocket. Glutamate 432 serves as a coordination point for ATP. Asparagine 435 lines the L-serine pocket. Position 461 (cysteine 461) interacts with Zn(2+). Residue arginine 468 coordinates ATP.

The protein belongs to the class-II aminoacyl-tRNA synthetase family. Type-2 seryl-tRNA synthetase subfamily. In terms of assembly, homodimer. Requires Zn(2+) as cofactor.

The protein localises to the cytoplasm. The enzyme catalyses tRNA(Ser) + L-serine + ATP = L-seryl-tRNA(Ser) + AMP + diphosphate + H(+). It carries out the reaction tRNA(Sec) + L-serine + ATP = L-seryl-tRNA(Sec) + AMP + diphosphate + H(+). It functions in the pathway aminoacyl-tRNA biosynthesis; selenocysteinyl-tRNA(Sec) biosynthesis; L-seryl-tRNA(Sec) from L-serine and tRNA(Sec): step 1/1. Functionally, catalyzes the attachment of serine to tRNA(Ser). Is also able to aminoacylate tRNA(Sec) with serine, to form the misacylated tRNA L-seryl-tRNA(Sec), which will be further converted into selenocysteinyl-tRNA(Sec). In Methanococcoides burtonii (strain DSM 6242 / NBRC 107633 / OCM 468 / ACE-M), this protein is Type-2 serine--tRNA ligase.